A 582-amino-acid chain; its full sequence is Aspartate--tRNA ligase (582 aa).

Glu-174 serves as a coordination point for L-aspartate. The tract at residues 198–201 (QITK) is aspartate. Arg-220 is an L-aspartate binding site. Residues 220–222 (RDE) and Gln-229 contribute to the ATP site. L-aspartate is bound at residue His-443. Glu-477 contacts ATP. Arg-484 serves as a coordination point for L-aspartate. Position 529–532 (529–532 (GLDR)) interacts with ATP.

It belongs to the class-II aminoacyl-tRNA synthetase family. Type 1 subfamily. Homodimer.

It is found in the cytoplasm. It carries out the reaction tRNA(Asp) + L-aspartate + ATP = L-aspartyl-tRNA(Asp) + AMP + diphosphate. Catalyzes the attachment of L-aspartate to tRNA(Asp) in a two-step reaction: L-aspartate is first activated by ATP to form Asp-AMP and then transferred to the acceptor end of tRNA(Asp). The chain is Aspartate--tRNA ligase from Streptococcus pyogenes serotype M5 (strain Manfredo).